The chain runs to 81 residues: MRNEQRRGGQRRGKPNLLQRAGVVQVDWKDTDLLRRFISDRGKIRSRRVTGLTMQEQREVATAIKNAREMALLPYPAAAKR.

It belongs to the bacterial ribosomal protein bS18 family. As to quaternary structure, part of the 30S ribosomal subunit. Forms a tight heterodimer with protein bS6.

In terms of biological role, binds as a heterodimer with protein bS6 to the central domain of the 16S rRNA, where it helps stabilize the platform of the 30S subunit. In Saccharopolyspora erythraea (strain ATCC 11635 / DSM 40517 / JCM 4748 / NBRC 13426 / NCIMB 8594 / NRRL 2338), this protein is Small ribosomal subunit protein bS18A.